Reading from the N-terminus, the 583-residue chain is MKLQLLFLTLAQLAKHGLAIPLLQSSKTTTNSTLVASQEVNFTTYVYPDTNSTNIFPMPKCQNITLEDATIDQLQNYMENGILTSTDIVHCYLDRYLQVNPYVNGILQLNPDVLTIASELDDERANGIIRGPLHGIPFIVKDNFATKDKMDTTAGSYALLGSIVPRDAYVVKQLREAGAVLFGHATLSEWADMRSNDYSEGYSARGGQSRCPFNLTVNPGGSSSGSAISVASNMIAFALGTETDGSIIDPAMRNGVVGLKPTVGLTSRYGVIPESEHQDTTGPIARTVRDAVYVFQSMWGIDENDIYTLNQTGKTPEDGDYMKFLSNKTSLEGARFGLPWKRLWQNAKADEIDRLLEVVKQIEEAGAIVYNNTNFYNLDVISNDGWNWELGSVNESEYTVVKVDFYNNIKSYLSEVKNTEIHSLEDIVEYNNKYMGTEGGKPNIVPAFSSGQDGFLASLEWGGVKNETYWQAVEYVRRTSQDEGIDYALNYTDPKTNDSFILNGLLVPSGTSITYQQAAKAGYPMITLPIGVKTNGRPFGLGIMHSAWQEPQLIKYGSAIEDLLQYKAKPKFYEYVAKNVPVW.

The signal sequence occupies residues 1 to 19 (MKLQLLFLTLAQLAKHGLA). Catalysis depends on charge relay system residues K141 and S222. The Acyl-ester intermediate role is filled by S246.

This sequence belongs to the amidase family.

The protein resides in the cytoplasm. The enzyme catalyses a monocarboxylic acid amide + H2O = a monocarboxylate + NH4(+). This chain is Putative amidase C869.01, found in Schizosaccharomyces pombe (strain 972 / ATCC 24843) (Fission yeast).